Consider the following 444-residue polypeptide: Glutamyl-tRNA reductase (444 aa).

Substrate is bound by residues 49 to 52 (TCNR), Ser109, 114 to 116 (ETQ), and Gln120. Residue Cys50 is the Nucleophile of the active site. Residue 189-194 (GAGKMG) participates in NADP(+) binding.

The protein belongs to the glutamyl-tRNA reductase family. As to quaternary structure, homodimer.

The catalysed reaction is (S)-4-amino-5-oxopentanoate + tRNA(Glu) + NADP(+) = L-glutamyl-tRNA(Glu) + NADPH + H(+). It participates in porphyrin-containing compound metabolism; protoporphyrin-IX biosynthesis; 5-aminolevulinate from L-glutamyl-tRNA(Glu): step 1/2. Functionally, catalyzes the NADPH-dependent reduction of glutamyl-tRNA(Glu) to glutamate 1-semialdehyde (GSA). The polypeptide is Glutamyl-tRNA reductase (Bacillus cereus (strain G9842)).